Reading from the N-terminus, the 124-residue chain is UPF0344 protein BH2983 (124 aa).

Helical transmembrane passes span 15–35 (GSWA…KAGK), 40–60 (KILH…GAGM), 61–81 (LVYW…IVLI), and 102–122 (IYWI…YNVI).

It belongs to the UPF0344 family.

It is found in the cell membrane. The protein is UPF0344 protein BH2983 of Halalkalibacterium halodurans (strain ATCC BAA-125 / DSM 18197 / FERM 7344 / JCM 9153 / C-125) (Bacillus halodurans).